The sequence spans 236 residues: Leucyl/phenylalanyl-tRNA--protein transferase (236 aa).

It belongs to the L/F-transferase family.

The protein resides in the cytoplasm. It carries out the reaction N-terminal L-lysyl-[protein] + L-leucyl-tRNA(Leu) = N-terminal L-leucyl-L-lysyl-[protein] + tRNA(Leu) + H(+). The enzyme catalyses N-terminal L-arginyl-[protein] + L-leucyl-tRNA(Leu) = N-terminal L-leucyl-L-arginyl-[protein] + tRNA(Leu) + H(+). It catalyses the reaction L-phenylalanyl-tRNA(Phe) + an N-terminal L-alpha-aminoacyl-[protein] = an N-terminal L-phenylalanyl-L-alpha-aminoacyl-[protein] + tRNA(Phe). In terms of biological role, functions in the N-end rule pathway of protein degradation where it conjugates Leu, Phe and, less efficiently, Met from aminoacyl-tRNAs to the N-termini of proteins containing an N-terminal arginine or lysine. The chain is Leucyl/phenylalanyl-tRNA--protein transferase from Shewanella oneidensis (strain ATCC 700550 / JCM 31522 / CIP 106686 / LMG 19005 / NCIMB 14063 / MR-1).